A 125-amino-acid chain; its full sequence is Late histone H2A.1 (125 aa).

Residues 1 to 18 (MSGRGKGKAKGTKSKTRS) are compositionally biased toward basic residues. Residues 1–21 (MSGRGKGKAKGTKSKTRSSRA) are disordered. N-acetylserine is present on Ser-2. Ser-2 carries the phosphoserine modification. Gln-104 carries the N5-methylglutamine modification. Lys-119 participates in a covalent cross-link: Glycyl lysine isopeptide (Lys-Gly) (interchain with G-Cter in ubiquitin).

The protein belongs to the histone H2A family. The nucleosome is a histone octamer containing two molecules each of H2A, H2B, H3 and H4 assembled in one H3-H4 heterotetramer and two H2A-H2B heterodimers. The octamer wraps approximately 147 bp of DNA. Post-translationally, monoubiquitination of Lys-119 gives a specific tag for epigenetic transcriptional repression. In terms of processing, phosphorylation of Ser-2 directly represses transcription.

Its subcellular location is the nucleus. The protein localises to the chromosome. Functionally, core component of nucleosome. Nucleosomes wrap and compact DNA into chromatin, limiting DNA accessibility to the cellular machineries which require DNA as a template. Histones thereby play a central role in transcription regulation, DNA repair, DNA replication and chromosomal stability. DNA accessibility is regulated via a complex set of post-translational modifications of histones, also called histone code, and nucleosome remodeling. This Psammechinus miliaris (Green sea urchin) protein is Late histone H2A.1.